A 155-amino-acid chain; its full sequence is Small ribosomal subunit protein uS7cz/uS7cy (155 aa).

The protein belongs to the universal ribosomal protein uS7 family. As to quaternary structure, part of the 30S ribosomal subunit.

Its subcellular location is the plastid. One of the primary rRNA binding proteins, it binds directly to 16S rRNA where it nucleates assembly of the head domain of the 30S subunit. The sequence is that of Small ribosomal subunit protein uS7cz/uS7cy (rps7-A) from Epifagus virginiana (Beechdrops).